The sequence spans 690 residues: MEDTFQDSASEDGGFDLRQEIARSAFADMCHDWERNQKYDRALQLTIARLHAAGQQAHVLDIGTGSGLLSMMAIRAGADSVVACEAFRPMADCAELIIAANGMQDRIRLVKKRSTKVTVGPGQDMERRANVLVTELFDTELIGEGALGTYRHALQHLLTEDVLTIPHQATVYAQVVECPLALSWQQLKTLSNADGDILLRVPPEVATCRGSSAVFDIQLSQLPAGSFNVLTDPVPVFKFAWSKHQELINDRCEQSVCHARTAGFPQAVFMWWDLTMDREGDVLLSCAPYWAHPEHEALKKKHSDNGSKRRLPEGNYIPWRDHWMQAVYFLPPLKIPLQRGQQFVLQSYHDEFSLWFGVGEQSVKEPLTAPHCTCGWHIAQSRSRIGQLNDSLRNKRYLNYFERVFSSDSVVLVLSEGSLLGLAAARMGVKQVLLYEPNAISRRCMEAFVEHNSVANVRFLPSADALEPEQAATITHVFAEPHFPSAILPWDNLHYGDLLKNLRPLLPASVTVIPASGTLYALPVEFVDLYKINAPLGSCEGFDLTLMDQLIDQHSTFADSPVEAQPLWEYPSFPLAGTTRLIEINFVKDFEQSKLERGELFVSEPERLNGIAIWIDWHLDGSHSPKTTISSGPLVPVEESSDEPTRWNTNWRQGVHLLRKTPNRKGTIPWSVKFNPVLSNVYFRFDEEEQ.

2 SAM-dependent MTase PRMT-type domains span residues Phe-5–Trp-355 and Lys-364–Gln-690.

This sequence belongs to the class I-like SAM-binding methyltransferase superfamily. Protein arginine N-methyltransferase family. PRMT7 subfamily.

Essential arginine methyltransferase that can both catalyze the formation of omega-N monomethylarginine (MMA) and symmetrical dimethylarginine (sDMA). Specifically mediates the symmetrical dimethylation of arginine residues in the small nuclear ribonucleoproteins SmD1 and SmD3. The sequence is that of Protein arginine N-methyltransferase 7 (Art7) from Anopheles gambiae (African malaria mosquito).